The following is a 238-amino-acid chain: Flagellar L-ring protein (238 aa).

An N-terminal signal peptide occupies residues 1–23 (MIKLFICQKKYYLTAIFLLTIQS). Cys24 is lipidated: N-palmitoyl cysteine. Cys24 is lipidated: S-diacylglycerol cysteine.

It belongs to the FlgH family. The basal body constitutes a major portion of the flagellar organelle and consists of four rings (L,P,S, and M) mounted on a central rod.

Its subcellular location is the cell outer membrane. It localises to the bacterial flagellum basal body. Its function is as follows. Assembles around the rod to form the L-ring and probably protects the motor/basal body from shearing forces during rotation. The sequence is that of Flagellar L-ring protein from Buchnera aphidicola subsp. Acyrthosiphon pisum (strain 5A).